Here is a 338-residue protein sequence, read N- to C-terminus: Methionine import ATP-binding protein MetN 1 (338 aa).

Residues 2-241 (IELHQVSKSF…AKHATTKRFV (240 aa)) enclose the ABC transporter domain. 38–45 (GYSGAGKS) is a binding site for ATP.

The protein belongs to the ABC transporter superfamily. Methionine importer (TC 3.A.1.24) family. As to quaternary structure, the complex is composed of two ATP-binding proteins (MetN), two transmembrane proteins (MetI) and a solute-binding protein (MetQ).

Its subcellular location is the cell membrane. The enzyme catalyses L-methionine(out) + ATP + H2O = L-methionine(in) + ADP + phosphate + H(+). The catalysed reaction is D-methionine(out) + ATP + H2O = D-methionine(in) + ADP + phosphate + H(+). Part of the ABC transporter complex MetNIQ involved in methionine import. Responsible for energy coupling to the transport system. This chain is Methionine import ATP-binding protein MetN 1, found in Listeria monocytogenes serotype 4b (strain F2365).